The sequence spans 178 residues: GPI mannosyltransferase 2 subunit C167.09 (178 aa).

The signal sequence occupies residues 1 to 20 (MREFRLIFVLLFFLPSFAIA). The Lumenal segment spans residues 21–152 (NTEIINVETG…LGFLPKSVLP (132 aa)). 5 N-linked (GlcNAc...) asparagine glycosylation sites follow: N48, N49, N106, N115, and N122. Residues 153–173 (IVGFVFVIILIALICMTNLFI) traverse the membrane as a helical segment. At 174-178 (KHKRD) the chain is on the cytoplasmic side.

In terms of assembly, part of the GPI mannosyltransferase 2 complex composed of gpi18 and C167.09.

It is found in the endoplasmic reticulum membrane. It functions in the pathway glycolipid biosynthesis; glycosylphosphatidylinositol-anchor biosynthesis. Functionally, essential component of the GPI mannosyltransferase 2 complex. Responsible for the transfer of the second mannose to the glycosylphosphatidylinositol during GPI precursor assembly. The chain is GPI mannosyltransferase 2 subunit C167.09 from Schizosaccharomyces pombe (strain 972 / ATCC 24843) (Fission yeast).